Consider the following 299-residue polypeptide: Light-independent protochlorophyllide reductase iron-sulfur ATP-binding protein (299 aa).

Positions 1-23 (MSPLDRTPPSLRGQDGEGSVQVH) are disordered. ATP is bound by residues 43–48 (GIGKST) and K72. S47 is a Mg(2+) binding site. 2 residues coordinate [4Fe-4S] cluster: C128 and C162. ATP is bound by residues 213–214 (NR) and 237–239 (PDL).

Belongs to the NifH/BchL/ChlL family. In terms of assembly, homodimer. Protochlorophyllide reductase is composed of three subunits; BchL, BchN and BchB. The cofactor is [4Fe-4S] cluster.

It catalyses the reaction chlorophyllide a + oxidized 2[4Fe-4S]-[ferredoxin] + 2 ADP + 2 phosphate = protochlorophyllide a + reduced 2[4Fe-4S]-[ferredoxin] + 2 ATP + 2 H2O. It participates in porphyrin-containing compound metabolism; bacteriochlorophyll biosynthesis (light-independent). Its function is as follows. Component of the dark-operative protochlorophyllide reductase (DPOR) that uses Mg-ATP and reduced ferredoxin to reduce ring D of protochlorophyllide (Pchlide) to form chlorophyllide a (Chlide). This reaction is light-independent. The L component serves as a unique electron donor to the NB-component of the complex, and binds Mg-ATP. This chain is Light-independent protochlorophyllide reductase iron-sulfur ATP-binding protein, found in Roseobacter denitrificans (strain ATCC 33942 / OCh 114) (Erythrobacter sp. (strain OCh 114)).